Reading from the N-terminus, the 207-residue chain is Transcription antitermination protein NusB (207 aa).

Belongs to the NusB family.

Involved in transcription antitermination. Required for transcription of ribosomal RNA (rRNA) genes. Binds specifically to the boxA antiterminator sequence of the ribosomal RNA (rrn) operons. The protein is Transcription antitermination protein NusB of Trichodesmium erythraeum (strain IMS101).